Reading from the N-terminus, the 292-residue chain is Protein/nucleic acid deglycase HchA (292 aa).

Over residues 1–12 (MSQDVNELSKQP) the composition is skewed to polar residues. Residues 1–23 (MSQDVNELSKQPTPDKAEDNAFF) form a disordered region. The active-site Nucleophile is the cysteine 190.

The protein belongs to the peptidase C56 family. HchA subfamily.

The protein localises to the cytoplasm. The catalysed reaction is N(omega)-(1-hydroxy-2-oxopropyl)-L-arginyl-[protein] + H2O = lactate + L-arginyl-[protein] + H(+). It carries out the reaction N(6)-(1-hydroxy-2-oxopropyl)-L-lysyl-[protein] + H2O = lactate + L-lysyl-[protein] + H(+). It catalyses the reaction S-(1-hydroxy-2-oxopropyl)-L-cysteinyl-[protein] + H2O = lactate + L-cysteinyl-[protein] + H(+). The enzyme catalyses N(omega)-(1-hydroxy-2-oxoethyl)-L-arginyl-[protein] + H2O = L-arginyl-[protein] + glycolate + H(+). The catalysed reaction is N(6)-(1-hydroxy-2-oxoethyl)-L-lysyl-[protein] + H2O = glycolate + L-lysyl-[protein] + H(+). It carries out the reaction S-(1-hydroxy-2-oxoethyl)-L-cysteinyl-[protein] + H2O = glycolate + L-cysteinyl-[protein] + H(+). It catalyses the reaction N(2)-(1-hydroxy-2-oxopropyl)-dGTP + H2O = lactate + dGTP + H(+). The enzyme catalyses N(2)-(1-hydroxy-2-oxopropyl)-GTP + H2O = lactate + GTP + H(+). The catalysed reaction is N(2)-(1-hydroxy-2-oxopropyl)-GDP + H2O = lactate + GDP + H(+). It carries out the reaction N(2)-(1-hydroxy-2-oxopropyl)-GMP + H2O = lactate + GMP + H(+). It catalyses the reaction N(2)-(1-hydroxy-2-oxoethyl)-dGTP + H2O = dGTP + glycolate + H(+). The enzyme catalyses N(2)-(1-hydroxy-2-oxoethyl)-GTP + H2O = glycolate + GTP + H(+). The catalysed reaction is N(2)-(1-hydroxy-2-oxoethyl)-GDP + H2O = glycolate + GDP + H(+). It carries out the reaction N(2)-(1-hydroxy-2-oxoethyl)-GMP + H2O = glycolate + GMP + H(+). It catalyses the reaction an N(2)-(1-hydroxy-2-oxopropyl)-guanosine in RNA + H2O = a guanosine in RNA + lactate + H(+). The enzyme catalyses an N(2)-(1-hydroxy-2-oxopropyl)-2'-deoxyguanosine in DNA + H2O = a 2'-deoxyguanosine in DNA + lactate + H(+). The catalysed reaction is an N(2)-(1-hydroxy-2-oxoethyl)-guanosine in RNA + H2O = a guanosine in RNA + glycolate + H(+). It carries out the reaction an N(2)-(1-hydroxy-2-oxoethyl)-2'-deoxyguanosine in DNA + H2O = a 2'-deoxyguanosine in DNA + glycolate + H(+). Protein and nucleotide deglycase that catalyzes the deglycation of the Maillard adducts formed between amino groups of proteins or nucleotides and reactive carbonyl groups of glyoxals. Thus, functions as a protein deglycase that repairs methylglyoxal- and glyoxal-glycated proteins, and releases repaired proteins and lactate or glycolate, respectively. Deglycates cysteine, arginine and lysine residues in proteins, and thus reactivates these proteins by reversing glycation by glyoxals. Acts on early glycation intermediates (hemithioacetals and aminocarbinols), preventing the formation of Schiff bases and advanced glycation endproducts (AGE). Also functions as a nucleotide deglycase able to repair glycated guanine in the free nucleotide pool (GTP, GDP, GMP, dGTP) and in DNA and RNA. Is thus involved in a major nucleotide repair system named guanine glycation repair (GG repair), dedicated to reversing methylglyoxal and glyoxal damage via nucleotide sanitization and direct nucleic acid repair. Plays an important role in protecting cells from carbonyl stress. This is Protein/nucleic acid deglycase HchA from Staphylococcus aureus (strain Newman).